The primary structure comprises 178 residues: Ribosome maturation factor RimM (178 aa).

Residues 99 to 178 form the PRC barrel domain; sequence EGDYYWHDLI…TIEVDWDAGF (80 aa).

This sequence belongs to the RimM family. Binds ribosomal protein uS19.

The protein localises to the cytoplasm. In terms of biological role, an accessory protein needed during the final step in the assembly of 30S ribosomal subunit, possibly for assembly of the head region. Essential for efficient processing of 16S rRNA. May be needed both before and after RbfA during the maturation of 16S rRNA. It has affinity for free ribosomal 30S subunits but not for 70S ribosomes. In Haemophilus influenzae (strain ATCC 51907 / DSM 11121 / KW20 / Rd), this protein is Ribosome maturation factor RimM.